A 137-amino-acid polypeptide reads, in one-letter code: Small ribosomal subunit protein uS12 (137 aa).

A disordered region spans residues 1–55 (MPTINQLVRKPRQSKIKKSDSPALNKGFNSKKKKFTDLNSPQKRGVCTRVGTMTP). At Asp-102 the chain carries 3-methylthioaspartic acid. The tract at residues 118 to 137 (SGVDGRRQGRSLYGTKKPKN) is disordered.

Belongs to the universal ribosomal protein uS12 family. In terms of assembly, part of the 30S ribosomal subunit. Contacts proteins S8 and S17. May interact with IF1 in the 30S initiation complex.

Its function is as follows. With S4 and S5 plays an important role in translational accuracy. In terms of biological role, interacts with and stabilizes bases of the 16S rRNA that are involved in tRNA selection in the A site and with the mRNA backbone. Located at the interface of the 30S and 50S subunits, it traverses the body of the 30S subunit contacting proteins on the other side and probably holding the rRNA structure together. The combined cluster of proteins S8, S12 and S17 appears to hold together the shoulder and platform of the 30S subunit. This chain is Small ribosomal subunit protein uS12, found in Staphylococcus aureus (strain Mu3 / ATCC 700698).